Consider the following 530-residue polypeptide: Phosphoenolpyruvate carboxykinase (ATP) (530 aa).

The substrate site is built by arginine 56, tyrosine 196, and lysine 202. ATP is bound by residues lysine 202, histidine 221, and glycine 237 to threonine 245. Mn(2+) contacts are provided by lysine 202 and histidine 221. Aspartate 258 contacts Mn(2+). ATP contacts are provided by residues glutamate 286, arginine 322, arginine 438–isoleucine 439, and threonine 444. Arginine 322 provides a ligand contact to substrate.

The protein belongs to the phosphoenolpyruvate carboxykinase (ATP) family. In terms of assembly, monomer. It depends on Mn(2+) as a cofactor.

The protein resides in the cytoplasm. The enzyme catalyses oxaloacetate + ATP = phosphoenolpyruvate + ADP + CO2. It functions in the pathway carbohydrate biosynthesis; gluconeogenesis. Functionally, involved in the gluconeogenesis. Catalyzes the conversion of oxaloacetate (OAA) to phosphoenolpyruvate (PEP) through direct phosphoryl transfer between the nucleoside triphosphate and OAA. In Photobacterium profundum (strain SS9), this protein is Phosphoenolpyruvate carboxykinase (ATP).